The sequence spans 817 residues: Actin filament-associated protein 1-like 2 (817 aa).

Tyrosine 56 bears the Phosphotyrosine mark. The interval 63 to 164 (HKQQNAESQD…KGKSAPHQWP (102 aa)) is disordered. A compositionally biased stretch (acidic residues) spans 123–139 (YYEEAEPYDTSLNEDGE). 2 consecutive PH domains span residues 175–271 (DARI…EVSG) and 353–447 (SLET…SESG). Serine 408 carries the post-translational modification Phosphoserine. A Phosphotyrosine modification is found at tyrosine 413. Serine 484 is modified (phosphoserine). Positions 512-528 (TTAGEAPEEATPATDAP) are enriched in low complexity. 2 disordered regions span residues 512 to 657 (TTAG…KLGK) and 754 to 786 (GTTV…VNSA). Residues 652–748 (EIKLGKNRTE…VKDSLRKAEA (97 aa)) are a coiled coil. A compositionally biased stretch (polar residues) spans 754–763 (GTTVDTTHLE). Low complexity predominate over residues 767–782 (PRPKAATPTPAPDCTP).

Interacts with SRC. Interacts with LCK when tyrosine phosphorylated. Tyrosine phosphorylated (by SRC).

The protein resides in the cytoplasm. In terms of biological role, may play a role in a signaling cascade by enhancing the kinase activity of SRC. Contributes to SRC-regulated transcription activation. The sequence is that of Actin filament-associated protein 1-like 2 (AFAP1L2) from Bos taurus (Bovine).